A 116-amino-acid chain; its full sequence is Non-specific lipid-transfer protein 1 (116 aa).

A signal peptide spans 1-25 (MARAQLVLVALVAALLLAAPHAAVA). 4 cysteine pairs are disulfide-bonded: Cys28/Cys75, Cys38/Cys52, Cys53/Cys98, and Cys73/Cys112.

The protein belongs to the plant LTP family. In terms of tissue distribution, aleurone (external part) of the seeds.

Its function is as follows. Plant non-specific lipid-transfer proteins transfer phospholipids as well as galactolipids across membranes. May play a role in wax or cutin deposition in the cell walls of expanding epidermal cells and certain secretory tissues. The polypeptide is Non-specific lipid-transfer protein 1 (LTP) (Oryza sativa subsp. indica (Rice)).